We begin with the raw amino-acid sequence, 99 residues long: Nucleoid-associated protein LL0120 (99 aa).

This sequence belongs to the YbaB/EbfC family. As to quaternary structure, homodimer.

The protein resides in the cytoplasm. The protein localises to the nucleoid. In terms of biological role, binds to DNA and alters its conformation. May be involved in regulation of gene expression, nucleoid organization and DNA protection. The polypeptide is Nucleoid-associated protein LL0120 (ybcG) (Lactococcus lactis subsp. lactis (strain IL1403) (Streptococcus lactis)).